Here is a 233-residue protein sequence, read N- to C-terminus: 5'-methylthioadenosine/S-adenosylhomocysteine nucleosidase (233 aa).

Residue glutamate 12 is the Proton acceptor of the active site. Substrate is bound by residues glycine 78, isoleucine 152, and 173 to 174; that span reads ME. Aspartate 197 acts as the Proton donor in catalysis.

The protein belongs to the PNP/UDP phosphorylase family. MtnN subfamily. In terms of assembly, homodimer.

It catalyses the reaction S-adenosyl-L-homocysteine + H2O = S-(5-deoxy-D-ribos-5-yl)-L-homocysteine + adenine. The catalysed reaction is S-methyl-5'-thioadenosine + H2O = 5-(methylsulfanyl)-D-ribose + adenine. It carries out the reaction 5'-deoxyadenosine + H2O = 5-deoxy-D-ribose + adenine. The protein operates within amino-acid biosynthesis; L-methionine biosynthesis via salvage pathway; S-methyl-5-thio-alpha-D-ribose 1-phosphate from S-methyl-5'-thioadenosine (hydrolase route): step 1/2. Functionally, catalyzes the irreversible cleavage of the glycosidic bond in both 5'-methylthioadenosine (MTA) and S-adenosylhomocysteine (SAH/AdoHcy) to adenine and the corresponding thioribose, 5'-methylthioribose and S-ribosylhomocysteine, respectively. Also cleaves 5'-deoxyadenosine, a toxic by-product of radical S-adenosylmethionine (SAM) enzymes, into 5-deoxyribose and adenine. Thus, is required for in vivo function of the radical SAM enzymes biotin synthase and lipoic acid synthase, that are inhibited by 5'-deoxyadenosine accumulation. This is 5'-methylthioadenosine/S-adenosylhomocysteine nucleosidase from Sodalis glossinidius (strain morsitans).